A 767-amino-acid chain; its full sequence is 5-methyltetrahydropteroyltriglutamate--homocysteine methyltransferase (767 aa).

5-methyltetrahydropteroyltri-L-glutamate contacts are provided by residues 17–20 and Lys117; that span reads RELK. Residues 442 to 444 and Glu495 contribute to the L-homocysteine site; that span reads IGS. L-methionine contacts are provided by residues 442-444 and Glu495; that span reads IGS. Residues 526-527 and Trp572 each bind 5-methyltetrahydropteroyltri-L-glutamate; that span reads RC. L-homocysteine is bound at residue Asp610. Asp610 is an L-methionine binding site. Glu616 is a 5-methyltetrahydropteroyltri-L-glutamate binding site. 3 residues coordinate Zn(2+): His653, Cys655, and Glu677. Residue His706 is the Proton donor of the active site. A Zn(2+)-binding site is contributed by Cys738.

It belongs to the vitamin-B12 independent methionine synthase family. Zn(2+) serves as cofactor.

It carries out the reaction 5-methyltetrahydropteroyltri-L-glutamate + L-homocysteine = tetrahydropteroyltri-L-glutamate + L-methionine. Its pathway is amino-acid biosynthesis; L-methionine biosynthesis via de novo pathway; L-methionine from L-homocysteine (MetE route): step 1/1. In terms of biological role, catalyzes the transfer of a methyl group from 5-methyltetrahydrofolate to homocysteine resulting in methionine formation. The sequence is that of 5-methyltetrahydropteroyltriglutamate--homocysteine methyltransferase from Bifidobacterium animalis subsp. lactis (strain AD011).